A 718-amino-acid chain; its full sequence is Amino-acid acetyltransferase, mitochondrial (718 aa).

Residues 1–36 (MNPNAVWPRTAQSSLKKHQVSLCTCQRRSHYRLRSF) constitute a mitochondrion transit peptide. The interval 97-116 (QHQPDLPQKPTSAPASTAKI) is disordered. In terms of domain architecture, N-acetyltransferase spans 539–708 (RQPRLRLDDP…YEAVCRSIQP (170 aa)).

This sequence belongs to the acetyltransferase family.

It localises to the mitochondrion. It carries out the reaction L-glutamate + acetyl-CoA = N-acetyl-L-glutamate + CoA + H(+). Its pathway is amino-acid biosynthesis; L-arginine biosynthesis; N(2)-acetyl-L-ornithine from L-glutamate: step 1/4. N-acetylglutamate synthase involved in arginine biosynthesis. This chain is Amino-acid acetyltransferase, mitochondrial (arg2), found in Aspergillus clavatus (strain ATCC 1007 / CBS 513.65 / DSM 816 / NCTC 3887 / NRRL 1 / QM 1276 / 107).